Here is a 298-residue protein sequence, read N- to C-terminus: Mimecan (298 aa).

Positions 1–20 are cleaved as a signal peptide; it reads MKTLQSTLLLLLLVPLIKPA. Thr80 is a glycosylation site (O-linked (GalNAc...) threonine). Asn88 carries an N-linked (GlcNAc...) (keratan sulfate) asparagine glycan. LRR repeat units follow at residues 112 to 131, 132 to 155, 156 to 179, 180 to 199, 200 to 225, 226 to 246, and 247 to 277; these read DAVP…FNKI, KKLT…GNLI, EDIE…ENQL, LKLP…YNKI, KSRG…HNAL, ESVP…FNNI, and ASIT…GNPI. The N-linked (GlcNAc...) (keratan sulfate) asparagine glycan is linked to Asn214. Cysteines 255 and 288 form a disulfide. Residue Asn258 is glycosylated (N-linked (GlcNAc...) (keratan sulfate) asparagine).

It belongs to the small leucine-rich proteoglycan (SLRP) family. SLRP class III subfamily. O-glycosylated with a core 1 or possibly core 8 glycan. Post-translationally, contains keratan sulfate. As to expression, bone.

The protein localises to the secreted. It localises to the extracellular space. Its subcellular location is the extracellular matrix. In terms of biological role, induces bone formation in conjunction with TGF-beta-1 or TGF-beta-2. In Homo sapiens (Human), this protein is Mimecan (OGN).